Consider the following 258-residue polypeptide: Ribosomal RNA small subunit methyltransferase A (258 aa).

Positions 13, 15, 40, 61, 86, and 106 each coordinate S-adenosyl-L-methionine.

It belongs to the class I-like SAM-binding methyltransferase superfamily. rRNA adenine N(6)-methyltransferase family. RsmA subfamily.

It localises to the cytoplasm. It catalyses the reaction adenosine(1518)/adenosine(1519) in 16S rRNA + 4 S-adenosyl-L-methionine = N(6)-dimethyladenosine(1518)/N(6)-dimethyladenosine(1519) in 16S rRNA + 4 S-adenosyl-L-homocysteine + 4 H(+). Functionally, specifically dimethylates two adjacent adenosines (A1518 and A1519) in the loop of a conserved hairpin near the 3'-end of 16S rRNA in the 30S particle. May play a critical role in biogenesis of 30S subunits. This chain is Ribosomal RNA small subunit methyltransferase A, found in Coxiella burnetii (strain CbuG_Q212) (Coxiella burnetii (strain Q212)).